The primary structure comprises 75 residues: MARYFRRRKFCRFTSEGVAEIDYKDIVTLKNYITESGKIVPSRITGTSAKYQRQLARAIKRARYLSLLPYTDLHQ.

It belongs to the bacterial ribosomal protein bS18 family. Part of the 30S ribosomal subunit. Forms a tight heterodimer with protein bS6.

Its function is as follows. Binds as a heterodimer with protein bS6 to the central domain of the 16S rRNA, where it helps stabilize the platform of the 30S subunit. The chain is Small ribosomal subunit protein bS18 from Shewanella denitrificans (strain OS217 / ATCC BAA-1090 / DSM 15013).